A 284-amino-acid chain; its full sequence is MNSFRFTKMHGLGNSYIYVNQFEEQLPEERLAEIAVKVSSIHTGIGSDGMILICPSEKAPVKMRIFNNDGSEGKNCGNGLRCVAKYAYEHKLTEETSFFIETLSGLVKADITEDNGIVREVAVDMGEPRLTKKELPMLGNEDERTIDETFVFGETELSGTAVSMGNPHIVFPVADINQAPLTTLGPVIEKDPRFPEGVNVEFVETVSADELHFRVWERGSGITQACGTGACAAAVASVLNGVSERNRDITVHLAGGDLVINWQDNGHVLMTGPAETVCSGVYYL.

Substrate is bound by residues asparagine 14 and asparagine 67. Cysteine 76 functions as the Proton donor in the catalytic mechanism. Substrate is bound by residues 77 to 78 (GN), asparagine 166, asparagine 199, and 217 to 218 (ER). Cysteine 226 functions as the Proton acceptor in the catalytic mechanism. 227–228 (GT) is a binding site for substrate.

The protein belongs to the diaminopimelate epimerase family. As to quaternary structure, homodimer.

It is found in the cytoplasm. The enzyme catalyses (2S,6S)-2,6-diaminopimelate = meso-2,6-diaminopimelate. Its pathway is amino-acid biosynthesis; L-lysine biosynthesis via DAP pathway; DL-2,6-diaminopimelate from LL-2,6-diaminopimelate: step 1/1. Functionally, catalyzes the stereoinversion of LL-2,6-diaminopimelate (L,L-DAP) to meso-diaminopimelate (meso-DAP), a precursor of L-lysine and an essential component of the bacterial peptidoglycan. The sequence is that of Diaminopimelate epimerase from Bacillus velezensis (strain DSM 23117 / BGSC 10A6 / LMG 26770 / FZB42) (Bacillus amyloliquefaciens subsp. plantarum).